The sequence spans 248 residues: Probable N-acetylglucosaminyl-phosphatidylinositol de-N-acetylase (248 aa).

At 1–7 (MIWFWST) the chain is on the lumenal side. The helical transmembrane segment at 8-24 (LLVTAIAVLSTANESSS) threads the bilayer. The Cytoplasmic segment spans residues 25–248 (GQEKLAVESI…MSNNVLKRAT (224 aa)).

Belongs to the PIGL family.

The protein localises to the endoplasmic reticulum membrane. The enzyme catalyses a 6-(N-acetyl-alpha-D-glucosaminyl)-1-(1,2-diacyl-sn-glycero-3-phospho)-1D-myo-inositol + H2O = a 6-(alpha-D-glucosaminyl)-1-(1,2-diacyl-sn-glycero-3-phospho)-1D-myo-inositol + acetate. It participates in glycolipid biosynthesis; glycosylphosphatidylinositol-anchor biosynthesis. Functionally, involved in the second step of GPI biosynthesis. De-N-acetylation of N-acetylglucosaminyl-phosphatidylinositol. The protein is Probable N-acetylglucosaminyl-phosphatidylinositol de-N-acetylase (gpi12) of Schizosaccharomyces pombe (strain 972 / ATCC 24843) (Fission yeast).